Here is an 806-residue protein sequence, read N- to C-terminus: MRSCTAAPGVSRTNTHARRGLGVAYRWAVSKTTRAQSGRLSSRFWRLLGATTEKNQNRSLAQVTASAEFDKEAADLNDEKLRKAAGLLNLEDLADSADIPQFLAIAREAGERATGLRPFDVQLLGALRMLAGDVIEMATGEGKTLAGAIAAAGYALGGRHVHVVTINDYLARRDAEWMAPLLEAMDLTVGWITAESTGADRRAAYECDVTYASVNEIGFDVLRDQLVTDVADLVSPNPDVALIDEADSVLVDEALVPLVLAGTTHRETPRLEIIKLVAQLVKDKDADEYFATDADSRNVHLTEAGARKVEKALGGIDLYSEEHVGTTLTEVNVALHAHVLLQRDVHYIVRDDAVHLINASRGRIAQLQRWPDGLQAAVEAKEGIETTETGEVLDTITVQALINRYVTVCGMTGTALAAGEQLRQFYKLGVSPIPPNTPNIREDESDRVYITAAAKNDAIVEHIAEVHDTGQPVLVGTRDVAESEDLHERLLRRDIPAVVLNAKNDAEEAAVIAEAGTLSRVTVSTQMAGRGTDIRLGGSDEADHDQVAELGGLHVVGTGRHHTQRLDNQLRGRAGRQGDPGSSVFFSSWEDDVVAANLDGNKLPMETDEDGQIVSAKAAGLLDHAQRVAEGRMLDVHANTWRYNQLIAQQRAIIVDRRNTLLRTATAREELADLAPKRYKELSETVSEHRLEKICRMIMLYHLDRGWADHLAYLADIRESIHLRALGRQNPLDEFHRMAVDAFASLAADAIEAAQQTFETANVLEDEPGLDLSKLARPTSTWTYMVNDNPLSDDTLSTLSLPGVFR.

Residues Q122, 140-144 (GEGKT), and D533 each bind ATP.

This sequence belongs to the SecA family. Monomer and homodimer. Part of the essential Sec protein translocation apparatus which comprises SecA, SecYEG and auxiliary proteins SecDF. Other proteins may also be involved.

The protein localises to the cell membrane. The protein resides in the cytoplasm. It catalyses the reaction ATP + H2O + cellular proteinSide 1 = ADP + phosphate + cellular proteinSide 2.. In terms of biological role, part of the Sec protein translocase complex. Interacts with the SecYEG preprotein conducting channel. Has a central role in coupling the hydrolysis of ATP to the transfer of proteins into and across the cell membrane, serving as an ATP-driven molecular motor driving the stepwise translocation of polypeptide chains across the membrane. In Mycobacterium ulcerans (strain Agy99), this protein is Protein translocase subunit SecA 2.